The primary structure comprises 393 residues: Methylthioribose kinase (393 aa).

ATP-binding positions include Asn-38, Lys-53, and Glu-107–Leu-109. Asp-225 contacts substrate. Residue Asp-242 to Glu-244 participates in ATP binding. Position 332 (Arg-332) interacts with substrate.

Belongs to the methylthioribose kinase family. Homodimer.

It catalyses the reaction 5-(methylsulfanyl)-D-ribose + ATP = 5-(methylsulfanyl)-alpha-D-ribose 1-phosphate + ADP + H(+). Its pathway is amino-acid biosynthesis; L-methionine biosynthesis via salvage pathway; S-methyl-5-thio-alpha-D-ribose 1-phosphate from S-methyl-5'-thioadenosine (hydrolase route): step 2/2. Functionally, catalyzes the phosphorylation of methylthioribose into methylthioribose-1-phosphate. This is Methylthioribose kinase from Bacillus cereus (strain 03BB102).